The sequence spans 896 residues: Putative mannosylglycerate hydrolase (896 aa).

A divalent metal cation-binding residues include histidine 12, aspartate 14, aspartate 125, and histidine 348. The Nucleophile role is filled by aspartate 125.

The protein belongs to the glycosyl hydrolase 38 family. Requires a divalent metal cation as cofactor.

It catalyses the reaction (2R)-2-O-(6-phospho-alpha-D-mannosyl)-glycerate + H2O = alpha-D-mannose 6-phosphate + (R)-glycerate. Functionally, may hydrolyze 6-phospho-mannosyl-D-glycerate to mannose-6-phosphate and glycerate. The polypeptide is Putative mannosylglycerate hydrolase (mngB) (Halalkalibacterium halodurans (strain ATCC BAA-125 / DSM 18197 / FERM 7344 / JCM 9153 / C-125) (Bacillus halodurans)).